A 126-amino-acid chain; its full sequence is Aspartate 1-decarboxylase (126 aa).

S25 functions as the Schiff-base intermediate with substrate; via pyruvic acid in the catalytic mechanism. S25 carries the pyruvic acid (Ser) modification. T57 serves as a coordination point for substrate. The active-site Proton donor is the Y58. Residue G73–A75 coordinates substrate.

The protein belongs to the PanD family. As to quaternary structure, heterooctamer of four alpha and four beta subunits. Requires pyruvate as cofactor. Is synthesized initially as an inactive proenzyme, which is activated by self-cleavage at a specific serine bond to produce a beta-subunit with a hydroxyl group at its C-terminus and an alpha-subunit with a pyruvoyl group at its N-terminus.

The protein localises to the cytoplasm. It catalyses the reaction L-aspartate + H(+) = beta-alanine + CO2. The protein operates within cofactor biosynthesis; (R)-pantothenate biosynthesis; beta-alanine from L-aspartate: step 1/1. In terms of biological role, catalyzes the pyruvoyl-dependent decarboxylation of aspartate to produce beta-alanine. The chain is Aspartate 1-decarboxylase from Stenotrophomonas maltophilia (strain R551-3).